Reading from the N-terminus, the 749-residue chain is Meiotically up-regulated gene 122 protein (749 aa).

At 1–20 (MYRKWDLCITRHLLPYIEHS) the chain is on the cytoplasmic side. Residues 21 to 41 (VIPIIALLVLSLIFYILYICF) form a helical; Signal-anchor for type II membrane protein membrane-spanning segment. The Lumenal portion of the chain corresponds to 42–749 (GTTSYILSGI…LLSNALRSII (708 aa)). Positions 88–261 (PPELEAPLQL…CIILYFSSSE (174 aa)) constitute a PXA domain. The region spanning 311 to 422 (LHYQFLKEAS…KFFAKSMRSH (112 aa)) is the PX domain. 2 disordered regions span residues 439–489 (QSSS…LSQQ) and 504–546 (GSCT…PPKP). Polar residues-rich tracts occupy residues 440-461 (SSSVPTLPNLTNISRVLSNKTS) and 475-489 (LSHQSTLAPEPLSQQ).

The protein belongs to the sorting nexin family.

Its subcellular location is the endoplasmic reticulum membrane. Its function is as follows. Has a role in meiosis. The polypeptide is Meiotically up-regulated gene 122 protein (mug122) (Schizosaccharomyces pombe (strain 972 / ATCC 24843) (Fission yeast)).